Reading from the N-terminus, the 146-residue chain is Transcriptional regulator MraZ (146 aa).

SpoVT-AbrB domains follow at residues N7 to L54 and G83 to A126.

The protein belongs to the MraZ family. As to quaternary structure, forms oligomers.

Its subcellular location is the cytoplasm. The protein localises to the nucleoid. This Rhizobium rhizogenes (strain K84 / ATCC BAA-868) (Agrobacterium radiobacter) protein is Transcriptional regulator MraZ.